Consider the following 359-residue polypeptide: NAC domain-containing protein 45 (359 aa).

Positions 19–185 (LPPGFRFHPT…EWVVCKVFHK (167 aa)) constitute an NAC domain. Residues 130-191 (VGMKKTLVFY…VFHKKGDDRE (62 aa)) mediate DNA binding.

In terms of tissue distribution, expressed in roots. Expressed at low levels in leaves, stems and panicles.

The protein localises to the nucleus. Functionally, transcription activator involved in responses to drought stress and salt stress. Transactivates the stress response genes LEA19 and PM19L. This Oryza sativa subsp. japonica (Rice) protein is NAC domain-containing protein 45.